We begin with the raw amino-acid sequence, 1198 residues long: DNA polymerase (1198 aa).

3 disordered regions span residues 1–90 (MALV…TVVA), 179–198 (LEQP…QPNP), and 906–931 (ALAD…PSGT). The segment covering 30 to 40 (QQPPRAAPAPA) has biased composition (low complexity).

The protein belongs to the DNA polymerase type-B family. In terms of assembly, heterodimer with the terminal protein; this heterodimer binds to bp 9 to 18 of the genome. Forms a complex with viral pTP, DBP and hosts NFIA and POU2F1/OCT1 for initiation of replication.

It is found in the host nucleus. It catalyses the reaction DNA(n) + a 2'-deoxyribonucleoside 5'-triphosphate = DNA(n+1) + diphosphate. Eukaryotic-type DNA polymerase involved in viral genomic replication. DNA synthesis is protein primed, and acts in a strand displacement replication. Assembles in complex with viral pTP, DBP, host NFIA and host POU2F1/OCT1 on viral origin of replication. The polymerase covalently transfers dCMP onto pTP, thereby initiating complementary strand synthesis. In Homo sapiens (Human), this protein is DNA polymerase.